The following is a 177-amino-acid chain: Thymidine kinase (177 aa).

Residue 11–18 (GPMFSGKS) coordinates ATP. E83 serves as the catalytic Proton acceptor. Position 113 (F113) interacts with substrate. Zn(2+)-binding residues include C138 and C141. 157–161 (IELIG) contacts substrate. Zn(2+)-binding residues include C170 and C173.

The protein belongs to the thymidine kinase family.

The enzyme catalyses thymidine + ATP = dTMP + ADP + H(+). This is Thymidine kinase (TK) from Sheeppox virus (strain KS-1) (SPPV).